Here is a 422-residue protein sequence, read N- to C-terminus: UPF0229 protein Spro_2732 (422 aa).

Residues 77-90 (PGNDHFVQNDRVER) are compositionally biased toward basic and acidic residues. The interval 77-109 (PGNDHFVQNDRVERPQGGGGGGSGQGNASQDGE) is disordered. Gly residues predominate over residues 92 to 101 (QGGGGGGSGQ).

The protein belongs to the UPF0229 family.

The protein is UPF0229 protein Spro_2732 of Serratia proteamaculans (strain 568).